The primary structure comprises 336 residues: Inositol 2-dehydrogenase (336 aa).

It belongs to the Gfo/Idh/MocA family. As to quaternary structure, homotetramer.

It carries out the reaction myo-inositol + NAD(+) = scyllo-inosose + NADH + H(+). In terms of biological role, involved in the oxidation of myo-inositol (MI) to 2-keto-myo-inositol (2KMI or 2-inosose). The sequence is that of Inositol 2-dehydrogenase from Agrobacterium fabrum (strain C58 / ATCC 33970) (Agrobacterium tumefaciens (strain C58)).